A 387-amino-acid polypeptide reads, in one-letter code: Solute carrier family 25 protein Shawn (387 aa).

Solcar repeat units follow at residues 37–156 (IRPL…FKAR), 179–263 (IPFL…LKSS), and 269–366 (PTFS…GKSF). 6 helical membrane-spanning segments follow: residues 43–63 (VASA…LDVI), 128–148 (LWSG…IYFV), 179–199 (IPFL…VTCV), 235–255 (LWRG…IYWT), 275–295 (FAAG…FDVV), and 337–357 (AIFS…AIMI).

The protein belongs to the mitochondrial carrier (TC 2.A.29) family.

Its subcellular location is the mitochondrion inner membrane. In terms of biological role, mitochondrial transporter required for glutathione import into mitochondria. The protein is Solute carrier family 25 protein Shawn of Drosophila melanogaster (Fruit fly).